The following is a 128-amino-acid chain: Small ribosomal subunit protein uS9 (128 aa).

Basic and acidic residues predominate over residues arginine 97 to lysine 113. Residues arginine 97–arginine 128 form a disordered region. A compositionally biased stretch (basic residues) spans proline 114–arginine 128.

Belongs to the universal ribosomal protein uS9 family.

The chain is Small ribosomal subunit protein uS9 from Phocaeicola vulgatus (strain ATCC 8482 / DSM 1447 / JCM 5826 / CCUG 4940 / NBRC 14291 / NCTC 11154) (Bacteroides vulgatus).